Reading from the N-terminus, the 159-residue chain is Siroheme decarboxylase beta subunit (159 aa).

Lysine 152–tyrosine 157 lines the substrate pocket.

It belongs to the Ahb/Nir family. In terms of assembly, forms a heterodimer composed of AhbA and AhbB.

It catalyses the reaction siroheme + 2 H(+) = 12,18-didecarboxysiroheme + 2 CO2. The protein operates within porphyrin-containing compound metabolism; protoheme biosynthesis. Functionally, involved in siroheme-dependent heme b biosynthesis. Catalyzes the decarboxylation of siroheme into didecarboxysiroheme. Siroheme is decarboxylated to monodecarboxysiroheme, which is in turn decarboxylated to didecarboxysiroheme. The polypeptide is Siroheme decarboxylase beta subunit (Desulfovibrio desulfuricans (strain ATCC 27774 / DSM 6949 / MB)).